The sequence spans 131 residues: uncharacterized protein (131 aa).

Positions 8 to 124 (DILVVDDDPD…ELIRLVQQYC (117 aa)) constitute a Response regulatory domain. The residue at position 57 (D57) is a 4-aspartylphosphate.

This is an uncharacterized protein from Leptolyngbya boryana (Plectonema boryanum).